A 106-amino-acid polypeptide reads, in one-letter code: Small ribosomal subunit protein uS10 (106 aa).

This sequence belongs to the universal ribosomal protein uS10 family. In terms of assembly, part of the 30S ribosomal subunit.

Its function is as follows. Involved in the binding of tRNA to the ribosomes. The chain is Small ribosomal subunit protein uS10 from Prochlorococcus marinus subsp. pastoris (strain CCMP1986 / NIES-2087 / MED4).